The following is a 542-amino-acid chain: CTP synthase (542 aa).

The segment at 1–265 is amidoligase domain; sequence MTKYIFVTGG…LKPISKELSL (265 aa). Residue Ser-13 participates in CTP binding. Residue Ser-13 participates in UTP binding. Residues 14–19 and Asp-71 each bind ATP; that span reads SLGKGI. Mg(2+) contacts are provided by Asp-71 and Glu-139. CTP is bound by residues 146-148, 186-191, and Lys-222; these read DIE and KSKPTQ. Residues 186–191 and Lys-222 contribute to the UTP site; that span reads KSKPTQ. In terms of domain architecture, Glutamine amidotransferase type-1 spans 290–541; the sequence is VLGFVGKYLE…VEATLAISQE (252 aa). Gly-352 contacts L-glutamine. Residue Cys-379 is the Nucleophile; for glutamine hydrolysis of the active site. L-glutamine is bound by residues 380–383, Glu-403, and Arg-471; that span reads LGMQ. Residues His-514 and Glu-516 contribute to the active site.

Belongs to the CTP synthase family. Homotetramer.

The enzyme catalyses UTP + L-glutamine + ATP + H2O = CTP + L-glutamate + ADP + phosphate + 2 H(+). It catalyses the reaction L-glutamine + H2O = L-glutamate + NH4(+). The catalysed reaction is UTP + NH4(+) + ATP = CTP + ADP + phosphate + 2 H(+). The protein operates within pyrimidine metabolism; CTP biosynthesis via de novo pathway; CTP from UDP: step 2/2. Its activity is regulated as follows. Allosterically activated by GTP, when glutamine is the substrate; GTP has no effect on the reaction when ammonia is the substrate. The allosteric effector GTP functions by stabilizing the protein conformation that binds the tetrahedral intermediate(s) formed during glutamine hydrolysis. Inhibited by the product CTP, via allosteric rather than competitive inhibition. In terms of biological role, catalyzes the ATP-dependent amination of UTP to CTP with either L-glutamine or ammonia as the source of nitrogen. Regulates intracellular CTP levels through interactions with the four ribonucleotide triphosphates. The sequence is that of CTP synthase from Sulfurimonas denitrificans (strain ATCC 33889 / DSM 1251) (Thiomicrospira denitrificans (strain ATCC 33889 / DSM 1251)).